Here is a 140-residue protein sequence, read N- to C-terminus: Putative pre-16S rRNA nuclease (140 aa).

This sequence belongs to the YqgF nuclease family.

The protein localises to the cytoplasm. Its function is as follows. Could be a nuclease involved in processing of the 5'-end of pre-16S rRNA. The protein is Putative pre-16S rRNA nuclease of Yersinia pseudotuberculosis serotype O:1b (strain IP 31758).